The chain runs to 548 residues: Protein NRT1/ PTR FAMILY 2.4 (548 aa).

12 consecutive transmembrane segments (helical) span residues Thr29–Ile49, Ile65–Phe85, Ile88–Ile108, Ile136–Ala156, Phe172–Val192, Trp200–Ala220, Leu316–Met336, Val354–Asn374, Leu393–Val413, Val429–Ala449, Ser468–Ile488, and Tyr508–Phe528.

The protein belongs to the major facilitator superfamily. Proton-dependent oligopeptide transporter (POT/PTR) (TC 2.A.17) family. Strongly expressed in the root stele.

It is found in the membrane. Transporter involved in a passive nitrate efflux. The protein is Protein NRT1/ PTR FAMILY 2.4 (NPF2.4) of Arabidopsis thaliana (Mouse-ear cress).